The primary structure comprises 274 residues: NAD(P)H-quinone oxidoreductase subunit K, chloroplastic (274 aa).

Polar residues-rich tracts occupy residues 1–10 and 18–27; these read MVINQKNLSS and SGSQSSTKAD. The interval 1-27 is disordered; the sequence is MVINQKNLSSPVAPYDKSGSQSSTKAD. [4Fe-4S] cluster-binding residues include Cys-90, Cys-91, Cys-155, and Cys-186.

It belongs to the complex I 20 kDa subunit family. NDH is composed of at least 16 different subunits, 5 of which are encoded in the nucleus. The cofactor is [4Fe-4S] cluster.

It is found in the plastid. Its subcellular location is the chloroplast thylakoid membrane. The catalysed reaction is a plastoquinone + NADH + (n+1) H(+)(in) = a plastoquinol + NAD(+) + n H(+)(out). It carries out the reaction a plastoquinone + NADPH + (n+1) H(+)(in) = a plastoquinol + NADP(+) + n H(+)(out). Functionally, NDH shuttles electrons from NAD(P)H:plastoquinone, via FMN and iron-sulfur (Fe-S) centers, to quinones in the photosynthetic chain and possibly in a chloroplast respiratory chain. The immediate electron acceptor for the enzyme in this species is believed to be plastoquinone. Couples the redox reaction to proton translocation, and thus conserves the redox energy in a proton gradient. This Chlorokybus atmophyticus (Soil alga) protein is NAD(P)H-quinone oxidoreductase subunit K, chloroplastic.